The following is a 368-amino-acid chain: Protein NDRG2 (368 aa).

Residues 330 to 339 (SLSSSYSMEG) are compositionally biased toward low complexity. Positions 330-368 (SLSSSYSMEGSRSRSRTLSQGSQGGQLPPSPSNTMEVSC) are disordered.

It belongs to the NDRG family.

The protein localises to the cytoplasm. Contributes to the regulation of the Wnt signaling pathway. Down-regulates CTNNB1-mediated transcriptional activation of target genes. May be involved in neuron differentiation. The protein is Protein NDRG2 (ndrg2) of Danio rerio (Zebrafish).